The chain runs to 548 residues: Glucose-6-phosphate isomerase (548 aa).

The active-site Proton donor is the E359. Catalysis depends on residues H390 and K510.

This sequence belongs to the GPI family.

It localises to the cytoplasm. The enzyme catalyses alpha-D-glucose 6-phosphate = beta-D-fructose 6-phosphate. It functions in the pathway carbohydrate biosynthesis; gluconeogenesis. The protein operates within carbohydrate degradation; glycolysis; D-glyceraldehyde 3-phosphate and glycerone phosphate from D-glucose: step 2/4. Functionally, catalyzes the reversible isomerization of glucose-6-phosphate to fructose-6-phosphate. In Gloeobacter violaceus (strain ATCC 29082 / PCC 7421), this protein is Glucose-6-phosphate isomerase.